The sequence spans 382 residues: MDIASSSLSQAHKVVLTRQPSSRVNTCSLGSVSAIGFSLPQISSPALGKCRRKQSSSGFVKACVAVEQKTRTAIIRIGTRGSPLALAQAYETREKLKKKHPELVEDGAIHIEIIKTTGDKILSQPLADIGGKGLFTKEIDEALINGHIDIAVHSMKDVPTYLPEKTILPCNLPREDVRDAFICLTAATLAELPAGSVVGTASLRRKSQILHKYPALHVEENFRGNVQTRLSKLQGGKVQATLLALAGLKRLSMTENVASILSLDEMLPAVAQGAIGIACRTDDDKMATYLASLNHEETRLAISCERAFLETLDGSCRTPIAGYASKDEEGNCIFRGLVASPDGTKVLETSRKGPYVYEDMVKMGKDAGQELLSRAGPGFFGN.

The N-terminal 62 residues, 1 to 62 (MDIASSSLSQ…KQSSSGFVKA (62 aa)), are a transit peptide targeting the chloroplast. 2 residues coordinate dipyrromethane: arginine 80 and serine 82. Serine 123 bears the Phosphoserine mark. Dipyrromethane contacts are provided by residues 156–157 (KD), 200–206 (TASLRRK), and 223–229 (RGNVQTR). Residue aspartate 157 is the Proton donor/acceptor of the active site. Cysteine 316 is subject to S-(dipyrrolylmethanemethyl)cysteine.

The protein belongs to the HMBS family. Monomer. The cofactor is dipyrromethane.

The protein resides in the plastid. Its subcellular location is the chloroplast. The enzyme catalyses 4 porphobilinogen + H2O = hydroxymethylbilane + 4 NH4(+). It functions in the pathway porphyrin-containing compound metabolism; protoporphyrin-IX biosynthesis; coproporphyrinogen-III from 5-aminolevulinate: step 2/4. Its pathway is porphyrin-containing compound metabolism; chlorophyll biosynthesis. With respect to regulation, inhibited by NH(3), heavy-metal ions, hydroxylamine and 2-bromoporphobilinogen. Not inhibited by N-ethylmaleimide. Tetrapolymerization of the monopyrrole PBG into the hydroxymethylbilane pre-uroporphyrinogen in several discrete steps. The polypeptide is Porphobilinogen deaminase, chloroplastic (HEMC) (Arabidopsis thaliana (Mouse-ear cress)).